The following is a 150-amino-acid chain: Protein Smg homolog (150 aa).

Belongs to the Smg family.

This chain is Protein Smg homolog, found in Leptothrix cholodnii (strain ATCC 51168 / LMG 8142 / SP-6) (Leptothrix discophora (strain SP-6)).